A 397-amino-acid chain; its full sequence is Succinate--CoA ligase [ADP-forming] subunit beta (397 aa).

Positions 9–254 (KELLRGYGAP…TSEEDEKEIE (246 aa)) constitute an ATP-grasp domain. ATP contacts are provided by residues lysine 46, 53 to 55 (GRG), glutamate 109, alanine 112, and glutamate 117. Residues asparagine 209 and aspartate 223 each contribute to the Mg(2+) site. Substrate is bound by residues asparagine 274 and 331–333 (GIM).

The protein belongs to the succinate/malate CoA ligase beta subunit family. Heterotetramer of two alpha and two beta subunits. Requires Mg(2+) as cofactor.

The catalysed reaction is succinate + ATP + CoA = succinyl-CoA + ADP + phosphate. It carries out the reaction GTP + succinate + CoA = succinyl-CoA + GDP + phosphate. The protein operates within carbohydrate metabolism; tricarboxylic acid cycle; succinate from succinyl-CoA (ligase route): step 1/1. In terms of biological role, succinyl-CoA synthetase functions in the citric acid cycle (TCA), coupling the hydrolysis of succinyl-CoA to the synthesis of either ATP or GTP and thus represents the only step of substrate-level phosphorylation in the TCA. The beta subunit provides nucleotide specificity of the enzyme and binds the substrate succinate, while the binding sites for coenzyme A and phosphate are found in the alpha subunit. The protein is Succinate--CoA ligase [ADP-forming] subunit beta of Chelativorans sp. (strain BNC1).